A 474-amino-acid polypeptide reads, in one-letter code: Pleckstrin homology domain-containing family S member 1 (474 aa).

Residues 20-135 form the PH domain; the sequence is EVHKRDYFIK…WVSFMTPYCQ (116 aa). Disordered regions lie at residues 232–251, 272–321, and 449–474; these read IAGPNDSGDSIESNSPDQGF, STSA…DDQK, and RDLPELERTPKRSPAIKKSQKEAAGE. Over residues 238-248 the composition is skewed to polar residues; the sequence is SGDSIESNSPD. The span at 449-458 shows a compositional bias: basic and acidic residues; the sequence is RDLPELERTP.

In Mus musculus (Mouse), this protein is Pleckstrin homology domain-containing family S member 1.